Here is a 173-residue protein sequence, read N- to C-terminus: Peptidyl-prolyl cis-trans isomerase 3 (173 aa).

One can recognise a PPIase cyclophilin-type domain in the interval 7-170 (FFDITIGGKA…KDCMIADCGQ (164 aa)).

This sequence belongs to the cyclophilin-type PPIase family. Exclusively expressed in the single anterior excretory cell.

The catalysed reaction is [protein]-peptidylproline (omega=180) = [protein]-peptidylproline (omega=0). Functionally, catalyzes the cis-trans isomerization of proline imidic peptide bonds in oligopeptides. Plays a role in protein folding, transport and assembly. The sequence is that of Peptidyl-prolyl cis-trans isomerase 3 (cyn-3) from Caenorhabditis elegans.